Consider the following 313-residue polypeptide: MVAYLEFEKPIAELQARIAELRSTADAGSLDLESEASKLEAKSDKLLRDTYAKLTPWQKTQVARHPERPHFKDYVAGFITDFMPLAGDRAFADDQAIIGGLGRLGDRKVMVIGHEKGDDTASRIRHNFGMAKPEGYRKAIRLMELADRFGLPVVSLVDTSGAFPGIQAEERGQAEAIARSTEACLALGVPMVAAVVGEGGSGGAIAVAAANSVLMFEHAVYSVISPEGCASILWRTGDKAAEAAEAMKVTAADLQKLGVVDRVVAEPVGGAHRDPAAAIAALGAAIGEELDKLAGKKPTALRAARRDKFLAIG.

One can recognise a CoA carboxyltransferase C-terminal domain in the interval 42-292 (KSDKLLRDTY…GAAIGEELDK (251 aa)).

Belongs to the AccA family. As to quaternary structure, acetyl-CoA carboxylase is a heterohexamer composed of biotin carboxyl carrier protein (AccB), biotin carboxylase (AccC) and two subunits each of ACCase subunit alpha (AccA) and ACCase subunit beta (AccD).

The protein resides in the cytoplasm. It catalyses the reaction N(6)-carboxybiotinyl-L-lysyl-[protein] + acetyl-CoA = N(6)-biotinyl-L-lysyl-[protein] + malonyl-CoA. Its pathway is lipid metabolism; malonyl-CoA biosynthesis; malonyl-CoA from acetyl-CoA: step 1/1. Component of the acetyl coenzyme A carboxylase (ACC) complex. First, biotin carboxylase catalyzes the carboxylation of biotin on its carrier protein (BCCP) and then the CO(2) group is transferred by the carboxyltransferase to acetyl-CoA to form malonyl-CoA. The sequence is that of Acetyl-coenzyme A carboxylase carboxyl transferase subunit alpha from Rhizorhabdus wittichii (strain DSM 6014 / CCUG 31198 / JCM 15750 / NBRC 105917 / EY 4224 / RW1) (Sphingomonas wittichii).